The sequence spans 154 residues: 6,7-dimethyl-8-ribityllumazine synthase (154 aa).

Residues Phe21, Ala55–Glu57, and Cys79–Ile81 each bind 5-amino-6-(D-ribitylamino)uracil. Position 84–85 (Ala84–Thr85) interacts with (2S)-2-hydroxy-3-oxobutyl phosphate. His87 acts as the Proton donor in catalysis. Phe112 serves as a coordination point for 5-amino-6-(D-ribitylamino)uracil. Residue Arg126 coordinates (2S)-2-hydroxy-3-oxobutyl phosphate.

The protein belongs to the DMRL synthase family. In terms of assembly, forms an icosahedral capsid composed of 60 subunits, arranged as a dodecamer of pentamers.

The catalysed reaction is (2S)-2-hydroxy-3-oxobutyl phosphate + 5-amino-6-(D-ribitylamino)uracil = 6,7-dimethyl-8-(1-D-ribityl)lumazine + phosphate + 2 H2O + H(+). It functions in the pathway cofactor biosynthesis; riboflavin biosynthesis; riboflavin from 2-hydroxy-3-oxobutyl phosphate and 5-amino-6-(D-ribitylamino)uracil: step 1/2. Its function is as follows. Catalyzes the formation of 6,7-dimethyl-8-ribityllumazine by condensation of 5-amino-6-(D-ribitylamino)uracil with 3,4-dihydroxy-2-butanone 4-phosphate. This is the penultimate step in the biosynthesis of riboflavin. This chain is 6,7-dimethyl-8-ribityllumazine synthase, found in Staphylococcus aureus (strain Newman).